A 213-amino-acid polypeptide reads, in one-letter code: Uridine kinase (213 aa).

15–22 provides a ligand contact to ATP; sequence GASASGKS.

This sequence belongs to the uridine kinase family.

Its subcellular location is the cytoplasm. The catalysed reaction is uridine + ATP = UMP + ADP + H(+). The enzyme catalyses cytidine + ATP = CMP + ADP + H(+). The protein operates within pyrimidine metabolism; CTP biosynthesis via salvage pathway; CTP from cytidine: step 1/3. It participates in pyrimidine metabolism; UMP biosynthesis via salvage pathway; UMP from uridine: step 1/1. This is Uridine kinase from Cronobacter sakazakii (strain ATCC BAA-894) (Enterobacter sakazakii).